The following is a 507-amino-acid chain: Secreted lipase ARB_01498 (507 aa).

A signal peptide spans 1–21 (MFVQLLTYGLVAASTLQGVFA). Residue S196 is the Acyl-ester intermediate of the active site. N-linked (GlcNAc...) asparagine glycosylation is found at N262, N321, N358, and N416.

Belongs to the type-B carboxylesterase/lipase family.

It is found in the secreted. The catalysed reaction is a triacylglycerol + H2O = a diacylglycerol + a fatty acid + H(+). The protein is Secreted lipase ARB_01498 of Arthroderma benhamiae (strain ATCC MYA-4681 / CBS 112371) (Trichophyton mentagrophytes).